The following is a 325-amino-acid chain: Ribonucleoside-diphosphate reductase subunit beta (325 aa).

Fe cation is bound by residues Asp73, Glu104, and His107. Tyr111 is an active-site residue. Fe cation is bound by residues Glu164, Glu198, and His201.

It belongs to the ribonucleoside diphosphate reductase small chain family. As to quaternary structure, tetramer of two alpha and two beta subunits. The cofactor is Fe cation.

The catalysed reaction is a 2'-deoxyribonucleoside 5'-diphosphate + [thioredoxin]-disulfide + H2O = a ribonucleoside 5'-diphosphate + [thioredoxin]-dithiol. Its function is as follows. Provides the precursors necessary for DNA synthesis. Catalyzes the biosynthesis of deoxyribonucleotides from the corresponding ribonucleotides. The chain is Ribonucleoside-diphosphate reductase subunit beta (nrdF) from Mycobacterium leprae (strain TN).